The primary structure comprises 238 residues: Fatty acid metabolism regulator protein (238 aa).

Positions 6 to 74 (QSPAGFAEEY…HGKPTKVNNF (69 aa)) constitute an HTH gntR-type domain. The H-T-H motif DNA-binding region spans 34-53 (ERELSELIGVTRTTLREVLQ).

Homodimer.

The protein localises to the cytoplasm. In terms of biological role, multifunctional regulator of fatty acid metabolism. This Erwinia tasmaniensis (strain DSM 17950 / CFBP 7177 / CIP 109463 / NCPPB 4357 / Et1/99) protein is Fatty acid metabolism regulator protein.